Here is a 304-residue protein sequence, read N- to C-terminus: DnaJ homolog subfamily C member 17 (304 aa).

A J domain is found at 11–76; sequence DLYALLGIEE…AARAAYDKVR (66 aa). Residues 79–106 show a composition bias toward basic and acidic residues; that stretch reads KKQAAERTQKLDEKRKKVKLDLEARERQ. The disordered stretch occupies residues 79-145; that stretch reads KKQAAERTQK…SRQLEEQQRL (67 aa). Serine 112 is modified (phosphoserine). Residues 118–145 show a composition bias toward basic and acidic residues; the sequence is SRSTRTLEQEIERLREEGSRQLEEQQRL. Residues 178–249 form the RRM domain; it reads KCKKEDESKG…NPLKISWLEG (72 aa). Lysine 264 bears the N6-methyllysine mark.

It localises to the cytoplasm. Its subcellular location is the nucleus. In terms of biological role, may negatively affect PAX8-induced thyroglobulin/TG transcription. This is DnaJ homolog subfamily C member 17 (DNAJC17) from Homo sapiens (Human).